A 122-amino-acid chain; its full sequence is MARIAGVDLPNKKRIEYGLTYIYGIGLYKSRQILDAAGISYDKRVFELSEDEAAAIRKEIQEHHIVEGDLRKQVAMDIKALMDLGSYRGLRHRKGLPVRGQKTKTNARTRKGRRKTVGAATK.

Basic residues predominate over residues 95-116; sequence GLPVRGQKTKTNARTRKGRRKT. Residues 95-122 form a disordered region; sequence GLPVRGQKTKTNARTRKGRRKTVGAATK.

It belongs to the universal ribosomal protein uS13 family. In terms of assembly, part of the 30S ribosomal subunit. Forms a loose heterodimer with protein S19. Forms two bridges to the 50S subunit in the 70S ribosome.

Its function is as follows. Located at the top of the head of the 30S subunit, it contacts several helices of the 16S rRNA. In the 70S ribosome it contacts the 23S rRNA (bridge B1a) and protein L5 of the 50S subunit (bridge B1b), connecting the 2 subunits; these bridges are implicated in subunit movement. Contacts the tRNAs in the A and P-sites. The polypeptide is Small ribosomal subunit protein uS13 (Campylobacter curvus (strain 525.92)).